Here is a 123-residue protein sequence, read N- to C-terminus: Large ribosomal subunit protein uL14 (123 aa).

It belongs to the universal ribosomal protein uL14 family. As to quaternary structure, part of the 50S ribosomal subunit. Forms a cluster with proteins L3 and L19. In the 70S ribosome, L14 and L19 interact and together make contacts with the 16S rRNA in bridges B5 and B8.

Functionally, binds to 23S rRNA. Forms part of two intersubunit bridges in the 70S ribosome. This chain is Large ribosomal subunit protein uL14, found in Vibrio parahaemolyticus serotype O3:K6 (strain RIMD 2210633).